We begin with the raw amino-acid sequence, 278 residues long: Large ribosomal subunit protein uL2 (278 aa).

Disordered stretches follow at residues 27-58 and 224-278; these read STPE…GGGH and VVMN…GKKR. Residues 37 to 58 are compositionally biased toward basic residues; it reads LHGKGGRNAHGRITTRHKGGGH. Basic and acidic residues predominate over residues 253–268; sequence PEGRTRKPNKPSDKLI. Over residues 269–278 the composition is skewed to basic residues; it reads VRRRRTGKKR.

The protein belongs to the universal ribosomal protein uL2 family. As to quaternary structure, part of the 50S ribosomal subunit. Forms a bridge to the 30S subunit in the 70S ribosome.

Its function is as follows. One of the primary rRNA binding proteins. Required for association of the 30S and 50S subunits to form the 70S ribosome, for tRNA binding and peptide bond formation. It has been suggested to have peptidyltransferase activity; this is somewhat controversial. Makes several contacts with the 16S rRNA in the 70S ribosome. The sequence is that of Large ribosomal subunit protein uL2 from Mycobacterium sp. (strain KMS).